A 319-amino-acid chain; its full sequence is ATP-dependent 6-phosphofructokinase (319 aa).

Residue glycine 11 coordinates ATP. Residue 21 to 25 (RAVAR) participates in ADP binding. ATP is bound by residues 72 to 73 (RY) and 102 to 105 (GDGS). A Mg(2+)-binding site is contributed by aspartate 103. 125–127 (TID) provides a ligand contact to substrate. Residue aspartate 127 is the Proton acceptor of the active site. Arginine 154 lines the ADP pocket. Residues arginine 162 and 169-171 (MGR) each bind substrate. ADP-binding positions include 185–187 (GAE) and arginine 211. Residues glutamate 222, arginine 243, and 249–252 (HIVR) each bind substrate.

The protein belongs to the phosphofructokinase type A (PFKA) family. ATP-dependent PFK group I subfamily. Prokaryotic clade 'B1' sub-subfamily. As to quaternary structure, homotetramer. Requires Mg(2+) as cofactor.

It localises to the cytoplasm. It carries out the reaction beta-D-fructose 6-phosphate + ATP = beta-D-fructose 1,6-bisphosphate + ADP + H(+). The protein operates within carbohydrate degradation; glycolysis; D-glyceraldehyde 3-phosphate and glycerone phosphate from D-glucose: step 3/4. Allosterically activated by ADP and other diphosphonucleosides, and allosterically inhibited by phosphoenolpyruvate. In terms of biological role, catalyzes the phosphorylation of D-fructose 6-phosphate to fructose 1,6-bisphosphate by ATP, the first committing step of glycolysis. This is ATP-dependent 6-phosphofructokinase from Lacticaseibacillus casei (strain BL23) (Lactobacillus casei).